The chain runs to 148 residues: Transcriptional regulator MraZ (148 aa).

2 consecutive SpoVT-AbrB domains span residues glutamate 5–glutamate 53 and serine 82–alanine 125.

This sequence belongs to the MraZ family. Forms oligomers.

The protein resides in the cytoplasm. It is found in the nucleoid. This is Transcriptional regulator MraZ from Xylella fastidiosa (strain 9a5c).